We begin with the raw amino-acid sequence, 375 residues long: Erythronate-4-phosphate dehydrogenase (375 aa).

Substrate is bound by residues serine 45 and threonine 66. NAD(+) contacts are provided by aspartate 146 and threonine 175. Residue arginine 208 is part of the active site. Aspartate 232 contributes to the NAD(+) binding site. The active site involves glutamate 237. Histidine 254 functions as the Proton donor in the catalytic mechanism. An NAD(+)-binding site is contributed by glycine 257. Position 258 (tyrosine 258) interacts with substrate.

This sequence belongs to the D-isomer specific 2-hydroxyacid dehydrogenase family. PdxB subfamily. In terms of assembly, homodimer.

The protein resides in the cytoplasm. The enzyme catalyses 4-phospho-D-erythronate + NAD(+) = (R)-3-hydroxy-2-oxo-4-phosphooxybutanoate + NADH + H(+). It participates in cofactor biosynthesis; pyridoxine 5'-phosphate biosynthesis; pyridoxine 5'-phosphate from D-erythrose 4-phosphate: step 2/5. In terms of biological role, catalyzes the oxidation of erythronate-4-phosphate to 3-hydroxy-2-oxo-4-phosphonooxybutanoate. This is Erythronate-4-phosphate dehydrogenase from Yersinia enterocolitica serotype O:8 / biotype 1B (strain NCTC 13174 / 8081).